A 338-amino-acid polypeptide reads, in one-letter code: D-alanine--D-alanine ligase (338 aa).

Residues 120 to 324 form the ATP-grasp domain; that stretch reads KRVMLAEGLP…YEDLCIEVLK (205 aa). 150 to 205 provides a ligand contact to ATP; sequence PDKLGLPLIVKPAREGSSIGLTKVTERAGMADAVAQAEKLDADILCEQFISGDEVT. Mg(2+) is bound by residues Asp277, Glu291, and Asn293.

The protein belongs to the D-alanine--D-alanine ligase family. The cofactor is Mg(2+). Mn(2+) is required as a cofactor.

Its subcellular location is the cytoplasm. The enzyme catalyses 2 D-alanine + ATP = D-alanyl-D-alanine + ADP + phosphate + H(+). It functions in the pathway cell wall biogenesis; peptidoglycan biosynthesis. In terms of biological role, cell wall formation. The protein is D-alanine--D-alanine ligase of Polaromonas sp. (strain JS666 / ATCC BAA-500).